The following is a 157-amino-acid chain: SsrA-binding protein (157 aa).

The tract at residues Val132–Lys157 is disordered. Residues Lys135 to Lys157 are compositionally biased toward basic and acidic residues.

Belongs to the SmpB family.

The protein localises to the cytoplasm. Required for rescue of stalled ribosomes mediated by trans-translation. Binds to transfer-messenger RNA (tmRNA), required for stable association of tmRNA with ribosomes. tmRNA and SmpB together mimic tRNA shape, replacing the anticodon stem-loop with SmpB. tmRNA is encoded by the ssrA gene; the 2 termini fold to resemble tRNA(Ala) and it encodes a 'tag peptide', a short internal open reading frame. During trans-translation Ala-aminoacylated tmRNA acts like a tRNA, entering the A-site of stalled ribosomes, displacing the stalled mRNA. The ribosome then switches to translate the ORF on the tmRNA; the nascent peptide is terminated with the 'tag peptide' encoded by the tmRNA and targeted for degradation. The ribosome is freed to recommence translation, which seems to be the essential function of trans-translation. The polypeptide is SsrA-binding protein (Francisella tularensis subsp. tularensis (strain FSC 198)).